We begin with the raw amino-acid sequence, 299 residues long: Probable lipid kinase YegS (299 aa).

Positions 2 to 133 (ANFPASLLIL…IDMARVNDKT (132 aa)) constitute a DAGKc domain. ATP is bound by residues Thr40, 66–72 (GDGTINE), and Thr95. Mg(2+) is bound by residues Leu215, Asp218, and Leu220. Glu271 acts as the Proton acceptor in catalysis.

The protein belongs to the diacylglycerol/lipid kinase family. YegS lipid kinase subfamily. It depends on Mg(2+) as a cofactor. Requires Ca(2+) as cofactor.

The protein resides in the cytoplasm. In terms of biological role, probably phosphorylates lipids; the in vivo substrate is unknown. The chain is Probable lipid kinase YegS from Salmonella gallinarum (strain 287/91 / NCTC 13346).